A 103-amino-acid chain; its full sequence is Small ribosomal subunit protein eS25 (103 aa).

A disordered region spans residues 1-23 (MGGEDMAKKKAPSAKEGEKQQGF).

The protein belongs to the eukaryotic ribosomal protein eS25 family.

This is Small ribosomal subunit protein eS25 (rps25e) from Aeropyrum pernix (strain ATCC 700893 / DSM 11879 / JCM 9820 / NBRC 100138 / K1).